A 144-amino-acid polypeptide reads, in one-letter code: Large ribosomal subunit protein uL15 (144 aa).

The segment at 1-58 is disordered; the sequence is MHLNTLSPAPGSHKARKRCGRGIGSGIGKTGGRGHKGQKSRSGGSVRPGFEGGQMPLK. Residues 21 to 31 are compositionally biased toward gly residues; it reads RGIGSGIGKTG.

Belongs to the universal ribosomal protein uL15 family. Part of the 50S ribosomal subunit.

Its function is as follows. Binds to the 23S rRNA. This is Large ribosomal subunit protein uL15 from Colwellia psychrerythraea (strain 34H / ATCC BAA-681) (Vibrio psychroerythus).